A 94-amino-acid polypeptide reads, in one-letter code: Small ubiquitin-related modifier 3 (94 aa).

Residue lysine 11 forms a Glycyl lysine isopeptide (Lys-Gly) (interchain with G-Cter in SUMO) linkage. Residues 15 to 92 form the Ubiquitin-like domain; that stretch reads DHINLKVAGQ…IDVFQQQTGG (78 aa). A Glycyl lysine isopeptide (Gly-Lys) (interchain with K-? in acceptor proteins) cross-link involves residue glycine 92. The propeptide occupies 93–94; it reads SC.

The protein belongs to the ubiquitin family. SUMO subfamily. As to quaternary structure, interacts with sae2 and ube2i. Covalently attached to a number of proteins. In terms of processing, polymeric chains can be formed through Lys-11 cross-linking. Post-translationally, cleavage of precursor form by a sentrin-specific protease is necessary for function.

The protein resides in the cytoplasm. The protein localises to the nucleus. It is found in the PML body. In terms of biological role, ubiquitin-like protein which can be covalently attached to target lysines either as a monomer or as a lysine-linked polymer. Does not seem to be involved in protein degradation and may function as an antagonist of ubiquitin in the degradation process. Plays a role in a number of cellular processes such as nuclear transport, DNA replication and repair, mitosis and signal transduction. Covalent attachment to its substrates requires prior activation by the E1 complex sae1-sae2 and linkage to the E2 enzyme ube2i. This Danio rerio (Zebrafish) protein is Small ubiquitin-related modifier 3 (sumo3).